A 292-amino-acid polypeptide reads, in one-letter code: Syntaxin-19 (292 aa).

A compositionally biased stretch (basic and acidic residues) spans 1–24 (MKDRLPELKQRTKETELSKDKDVP). Residues 1–28 (MKDRLPELKQRTKETELSKDKDVPTTEA) are disordered. The stretch at 46-122 (VAERHLHEIQ…VKEVKKSEDE (77 aa)) forms a coiled coil. Positions 209–271 (LSEIEQRHKE…NTTKEKFGLA (63 aa)) constitute a t-SNARE coiled-coil homology domain.

The protein belongs to the syntaxin family. Interacts with EGFR.

The protein resides in the cell membrane. It is found in the cytoplasm. Functionally, plays a role in endosomal trafficking of the epidermal growth factor receptor (EGFR). The protein is Syntaxin-19 (STX19) of Bos taurus (Bovine).